A 239-amino-acid chain; its full sequence is MKIDILTLFPEMFSPLEHSIVGKAREKGLLDIQYHNFRENAEKARHVDDEPYGGGQGMLLRAQPIFDSFDAIEKKNPRVILLDPAGKQFDQAYAEDLAQEEELIFICGHYEGYDERIKTLVTDEISLGDYVLTGGELAAMTMIDATVRLIPEVIGKESSHQDDSFSSGLLEYPQYTRPYDYRGMVVPDVLMSGHHEKIRQWRLYESLKKTYERRPDLLEHYQLTVEEEKMLAEIKENKE.

S-adenosyl-L-methionine-binding positions include G108 and L127–L132.

It belongs to the RNA methyltransferase TrmD family. Homodimer.

The protein localises to the cytoplasm. The enzyme catalyses guanosine(37) in tRNA + S-adenosyl-L-methionine = N(1)-methylguanosine(37) in tRNA + S-adenosyl-L-homocysteine + H(+). In terms of biological role, specifically methylates guanosine-37 in various tRNAs. The protein is tRNA (guanine-N(1)-)-methyltransferase of Streptococcus pneumoniae serotype 19F (strain G54).